We begin with the raw amino-acid sequence, 519 residues long: Sensory neuron membrane protein 2 (519 aa).

Residues 1 to 7 are Cytoplasmic-facing; it reads MLAKHSK. The helical transmembrane segment at 8–28 threads the bilayer; the sequence is LFFTGSVVFLIVAIVLASWGF. Over 29-469 the chain is Extracellular; the sequence is PKIISTRIQK…DAHALLSYAQ (441 aa). N-linked (GlcNAc...) asparagine glycans are attached at residues Asn44, Asn67, Asn104, Asn166, Asn229, Asn272, and Asn314. 3 disulfides stabilise this stretch: Cys268–Cys338, Cys299–Cys362, and Cys340–Cys351. A helical membrane pass occupies residues 470–490; sequence LARWIILAAAIILAIIATITV. Topologically, residues 491-519 are cytoplasmic; sequence ARSTSLISWPRNSNSVNFIIGPMVNDKMR.

It belongs to the CD36 family. In terms of tissue distribution, localizes to both male and female antennae but not the leg, wing, gut, head or thoracic ganglia. Detected throughout the sensory epithelium, associating with both sex-pheromone sensilla and plant-volatile sensilla. Differentially expressed among different sensilla and different neurons within a given sensillum.

It is found in the cell membrane. In terms of biological role, plays an olfactory role that is not restricted to pheromone sensitivity. The protein is Sensory neuron membrane protein 2 of Manduca sexta (Tobacco hawkmoth).